The sequence spans 59 residues: U17-myrmicitoxin-Tb1f (59 aa).

Positions 1–27 are cleaved as a signal peptide; the sequence is MEKNRTTTFSVYLTIILFLISTFITMV. A propeptide spanning residues 28 to 31 is cleaved from the precursor; it reads ITES. A Histidine amide modification is found at His58.

In terms of tissue distribution, expressed by the venom gland.

The protein localises to the secreted. This is U17-myrmicitoxin-Tb1f from Tetramorium bicarinatum (Tramp ant).